Here is a 546-residue protein sequence, read N- to C-terminus: Chaperonin GroEL (546 aa).

Residues T29–P32, K50, D86–T90, G414, N477–L479, and D493 contribute to the ATP site.

The protein belongs to the chaperonin (HSP60) family. In terms of assembly, forms a cylinder of 14 subunits composed of two heptameric rings stacked back-to-back. Interacts with the co-chaperonin GroES.

The protein resides in the cytoplasm. The enzyme catalyses ATP + H2O + a folded polypeptide = ADP + phosphate + an unfolded polypeptide.. Its function is as follows. Together with its co-chaperonin GroES, plays an essential role in assisting protein folding. The GroEL-GroES system forms a nano-cage that allows encapsulation of the non-native substrate proteins and provides a physical environment optimized to promote and accelerate protein folding. The protein is Chaperonin GroEL of Leptospira interrogans serogroup Icterohaemorrhagiae serovar copenhageni (strain Fiocruz L1-130).